The following is a 250-amino-acid chain: Proteasome subunit alpha (250 aa).

It belongs to the peptidase T1A family. The 20S proteasome core is composed of 14 alpha and 14 beta subunits that assemble into four stacked heptameric rings, resulting in a barrel-shaped structure. The two inner rings, each composed of seven catalytic beta subunits, are sandwiched by two outer rings, each composed of seven alpha subunits. The catalytic chamber with the active sites is on the inside of the barrel. Has a gated structure, the ends of the cylinder being occluded by the N-termini of the alpha-subunits. Is capped by the proteasome-associated ATPase, ARC.

The protein resides in the cytoplasm. The protein operates within protein degradation; proteasomal Pup-dependent pathway. Its activity is regulated as follows. The formation of the proteasomal ATPase ARC-20S proteasome complex, likely via the docking of the C-termini of ARC into the intersubunit pockets in the alpha-rings, may trigger opening of the gate for substrate entry. Interconversion between the open-gate and close-gate conformations leads to a dynamic regulation of the 20S proteasome proteolysis activity. Its function is as follows. Component of the proteasome core, a large protease complex with broad specificity involved in protein degradation. The chain is Proteasome subunit alpha from Mycobacterium sp. (strain JLS).